Reading from the N-terminus, the 223-residue chain is Glutathione S-transferase A1 (223 aa).

Residue Met1 is modified to N-acetylmethionine. Position 2 is an N-acetylalanine; in Glutathione S-transferase A1, N-terminally processed (Ala2). One can recognise a GST N-terminal domain in the interval 3 to 83 (GKPVLHYFNA…YIATKYDLYG (81 aa)). Residue Lys4 is modified to N6-succinyllysine. Glutathione is bound by residues Tyr9, Lys45, 54–55 (QV), and 67–68 (QT). A GST C-terminal domain is found at 85–208 (DMKERALIDM…QPGSQRKPPM (124 aa)).

This sequence belongs to the GST superfamily. Alpha family. In terms of assembly, homodimer. In terms of tissue distribution, expressed in the liver, skin and kidney.

It catalyses the reaction RX + glutathione = an S-substituted glutathione + a halide anion + H(+). The enzyme catalyses prostaglandin A2 + glutathione = prostaglandin A2-S-(R)-glutathione. It carries out the reaction prostaglandin J2 + glutathione = prostaglandin J2-S-(R)-glutathione. The catalysed reaction is (13S)-hydroperoxy-(9Z,11E)-octadecadienoate + 2 glutathione = (13S)-hydroxy-(9Z,11E)-octadecadienoate + glutathione disulfide + H2O. It catalyses the reaction androst-5-ene-3,17-dione = androst-4-ene-3,17-dione. Its function is as follows. Glutathione S-transferase that catalyzes the nucleophilic attack of the sulfur atom of glutathione on the electrophilic groups of a wide range of exogenous and endogenous compounds. Involved in the formation of glutathione conjugates of both prostaglandin A2 (PGA2) and prostaglandin J2 (PGJ2). It also catalyzes the isomerization of D5-androstene-3,17-dione (AD) into D4-androstene-3,17-dione and may therefore play an important role in hormone biosynthesis. Through its glutathione-dependent peroxidase activity toward the fatty acid hydroperoxide (13S)-hydroperoxy-(9Z,11E)-octadecadienoate/13-HPODE it is also involved in the metabolism of oxidized linoleic acid. The polypeptide is Glutathione S-transferase A1 (Gsta1) (Mus musculus (Mouse)).